The chain runs to 344 residues: Putative transport protein sll0060 (344 aa).

Helical transmembrane passes span 14 to 34 (LWIGLTLPLCLLNGWVLLQIL), 41 to 61 (LRIFIIANLVAFILGYPVRWL), 72 to 92 (AVALVLLTTAIILAVIGLLVI), 155 to 175 (LINLLIWTAGSLVEAGFIFIM), 215 to 235 (IGQATVAALLGVSLIISLSIF), 237 to 257 (VPLALLFGMFVGFMAFFPFGG), 262 to 282 (VLISIIASFQSIWLGIKVLAI), and 310 to 330 (ILLSLMIGAKVAGLLGILVAI).

This sequence belongs to the autoinducer-2 exporter (AI-2E) (TC 2.A.86) family.

Its subcellular location is the cell membrane. This Synechocystis sp. (strain ATCC 27184 / PCC 6803 / Kazusa) protein is Putative transport protein sll0060.